Consider the following 130-residue polypeptide: Small ribosomal subunit protein uS9 (130 aa).

The protein belongs to the universal ribosomal protein uS9 family.

In Vibrio atlanticus (strain LGP32) (Vibrio splendidus (strain Mel32)), this protein is Small ribosomal subunit protein uS9.